The primary structure comprises 1144 residues: MKLSRQFTVFGSAIFCVVIFSLYLMLDRGHLDYPRNPRREGSFPQGQLSMLQEKIDHLERLLAENNEIISNIRDSVINLSESVEDGPKSSQSNFSQGAGSHLLPSQLSLSVDTADCLFASQSGSHNSDVQMLDVYSLISFDNPDGGVWKQGFDITYESNEWDTEPLQVFVVPHSHNDPGWLKTFNDYFRDKTQYIFNNMVLKLKEDSRRKFIWSEISYLSKWWDIIDIQKKDAVKSLIENGQLEIVTGGWVMPDEATPHYFALIDQLIEGHQWLENNIGVKPRSGWAIDPFGHSPTMAYLLNRAGLSHMLIQRVHYAVKKHFALHKTLEFFWRQNWDLGSVTDILCHMMPFYSYDIPHTCGPDPKICCQFDFKRLPGGRFGCPWGVPPETIHPGNVQSRARMLLDQYRKKSKLFRTKVLLAPLGDDFRYCEYTEWDLQFKNYQQLFDYMNSQSKFKVKIQFGTLSDFFDALDKADETQRDKGQSMFPVLSGDFFTYADRDDHYWSGYFTSRPFYKRMDRIMESHLRAAEILYYFALRQAHKYKINKFLSSSLYTALTEARRNLGLFQHHDAITGTAKDWVVVDYGTRLFHSLMVLEKIIGNSAFLLILKDKLTYDSYSPDTFLEMDLKQKSQDSLPQKNIIRLSAEPRYLVVYNPLEQDRISLVSVYVSSPTVQVFSASGKPVEVQVSAVWDTANTISETAYEISFRAHIPPLGLKVYKILESASSNSHLADYVLYKNKVEDSGIFTIKNMINTEEGITLENSFVLLRFDQTGLMKQMMTKEDGKHHEVNVQFSWYGTTIKRDKSGAYLFLPDGNAKPYVYTTPPFVRVTHGRIYSEVTCFFDHVTHRVRLYHIQGIEGQSVEVSNIVDIRKVYNREIAMKISSDIKSQNRFYTDLNGYQIQPRMTLSKLPLQANVYPMTTMAYIQDAKHRLTLLSAQSLGVSSLNSGQIEVIMDRRLMQDDNRGLEQGIQDNKITANLFRILLEKRSAVNTEEEKKSVSYPSLLSHITSSLMNHPVIPMANKFSSPTLELQGEFSPLQSSLPCDIHLVNLRTIQSKVGNGHSNEAALILHRKGFDCRFSSKGTGLFCSTTQGKILVQKLLNKFIVESLTPSSLSLMHSPPGTQNISEINLSPMEISTFRIQLR.

Over 1–5 (MKLSR) the chain is Cytoplasmic. Residues 6–26 (QFTVFGSAIFCVVIFSLYLML) traverse the membrane as a helical; Signal-anchor for type II membrane protein segment. The Lumenal segment spans residues 27–1144 (DRGHLDYPRN…EISTFRIQLR (1118 aa)). Asn-78 carries N-linked (GlcNAc...) asparagine glycosylation. A phosphoserine mark is found at Ser-80 and Ser-82. N-linked (GlcNAc...) asparagine glycosylation is present at Asn-93. The Zn(2+) site is built by His-175, Asp-177, Asp-289, and His-569. Catalysis depends on Asp-289, which acts as the Nucleophile. An N-linked (GlcNAc...) asparagine glycan is attached at Asn-1125.

It belongs to the glycosyl hydrolase 38 family. In terms of assembly, homodimer; disulfide-linked. Zn(2+) serves as cofactor. Glycosylated.

It is found in the golgi apparatus membrane. It carries out the reaction N(4)-{beta-D-GlcNAc-(1-&gt;2)-alpha-D-Man-(1-&gt;3)-[alpha-D-Man-(1-&gt;3)-[alpha-D-Man-(1-&gt;6)]-alpha-D-Man-(1-&gt;6)]-beta-D-Man-(1-&gt;4)-beta-D-GlcNAc-(1-&gt;4)-beta-D-GlcNAc}-L-asparaginyl-[protein] + 2 H2O = 2 alpha-D-mannopyranose + an N(4)-{beta-D-GlcNAc-(1-&gt;2)-alpha-D-Man-(1-&gt;3)-[alpha-D-Man-(1-&gt;6)]-beta-D-Man-(1-&gt;4)-beta-D-GlcNAc-(1-&gt;4)-beta-D-GlcNAc}-L-asparaginyl-[protein]. Its pathway is protein modification; protein glycosylation. Catalyzes the first committed step in the biosynthesis of complex N-glycans. It controls conversion of high mannose to complex N-glycans; the final hydrolytic step in the N-glycan maturation pathway. This Homo sapiens (Human) protein is Alpha-mannosidase 2 (MAN2A1).